Consider the following 394-residue polypeptide: Chaperone protein DnaJ (394 aa).

Residues 5–75 (DYYEVLGVDK…EKKQQYDQFG (71 aa)) form the J domain. Residues 150–231 (GVEKTIKYKR…CRGTGTAKET (82 aa)) form a CR-type zinc finger. Zn(2+) contacts are provided by C163, C166, C179, C182, C205, C208, C219, and C222. 4 CXXCXGXG motif repeats span residues 163–170 (CEHCHGTG), 179–186 (CPTCNGQG), 205–212 (CPDCHGTG), and 219–226 (CKHCRGTG).

The protein belongs to the DnaJ family. As to quaternary structure, homodimer. Zn(2+) serves as cofactor.

It is found in the cytoplasm. Its function is as follows. Participates actively in the response to hyperosmotic and heat shock by preventing the aggregation of stress-denatured proteins and by disaggregating proteins, also in an autonomous, DnaK-independent fashion. Unfolded proteins bind initially to DnaJ; upon interaction with the DnaJ-bound protein, DnaK hydrolyzes its bound ATP, resulting in the formation of a stable complex. GrpE releases ADP from DnaK; ATP binding to DnaK triggers the release of the substrate protein, thus completing the reaction cycle. Several rounds of ATP-dependent interactions between DnaJ, DnaK and GrpE are required for fully efficient folding. Also involved, together with DnaK and GrpE, in the DNA replication of plasmids through activation of initiation proteins. This Fusobacterium nucleatum subsp. polymorphum (Fusobacterium polymorphum) protein is Chaperone protein DnaJ.